The chain runs to 217 residues: Phosphoenolpyruvate guanylyltransferase (217 aa).

Phosphoenolpyruvate is bound by residues threonine 150, glycine 165, and serine 168.

This sequence belongs to the CofC family.

The catalysed reaction is phosphoenolpyruvate + GTP + H(+) = enolpyruvoyl-2-diphospho-5'-guanosine + diphosphate. Its pathway is cofactor biosynthesis; coenzyme F420 biosynthesis. Its function is as follows. Guanylyltransferase that catalyzes the activation of phosphoenolpyruvate (PEP) as enolpyruvoyl-2-diphospho-5'-guanosine, via the condensation of PEP with GTP. It is involved in the biosynthesis of coenzyme F420, a hydride carrier cofactor. This Mycobacterium marinum (strain ATCC BAA-535 / M) protein is Phosphoenolpyruvate guanylyltransferase.